A 245-amino-acid chain; its full sequence is tRNA1(Val) (adenine(37)-N6)-methyltransferase (245 aa).

It belongs to the methyltransferase superfamily. tRNA (adenine-N(6)-)-methyltransferase family.

It localises to the cytoplasm. It catalyses the reaction adenosine(37) in tRNA1(Val) + S-adenosyl-L-methionine = N(6)-methyladenosine(37) in tRNA1(Val) + S-adenosyl-L-homocysteine + H(+). In terms of biological role, specifically methylates the adenine in position 37 of tRNA(1)(Val) (anticodon cmo5UAC). This chain is tRNA1(Val) (adenine(37)-N6)-methyltransferase, found in Cronobacter sakazakii (strain ATCC BAA-894) (Enterobacter sakazakii).